Here is a 413-residue protein sequence, read N- to C-terminus: Hemolin (413 aa).

The N-terminal stretch at 1–18 (MASKSLVVLSACIIIGSA) is a signal peptide. Ig-like C2-type domains follow at residues 25–112 (PVLK…RVIS), 122–211 (PAKT…GEVR), 233–322 (PQYL…LKVT), and 327–413 (PKYV…VQVN). Intrachain disulfides connect Cys-46/Cys-97, Cys-140/Cys-199, Cys-252/Cys-305, and Cys-349/Cys-395. Residue Asn-283 is glycosylated (N-linked (GlcNAc...) asparagine).

This sequence belongs to the hemolin family. As to expression, expressed in larval bristles.

It localises to the secreted. Increased activity in presence of phospholipids (low concentrations) and calcium ions. Inhibited by PMSF. Not affected by EDTA and E-64. Functionally, bristle toxin involved in caterpillar defense by participating in hemorrhagic syndrome characterized by a consumptive coagulopathy. Exhibits procoagulant activity through selective factor X proteolytic activation. Activates factor X in a dose- and time-dependent manner but does not activate gamma-carboxyglutamic acid domainless factor X. Its activity does not depend on calcium ions. Also functions as a growth stimulator and an inhibitor of cellular death for endothelial cells. In vitro, increases proliferation of human umbilical vein endothelial cells (HUVEC) and inhibits the apoptosis induced by starvation. Also increases slightly the complement decay-accelerating factor (CD55), which protects cells from complement-mediated lysis. On the other hand, does not alter the release or expression of von Willebrand factor (VWF), tissue factor (F3), intercellular adhesion molecule-1 (ICAM1), interleukin-8 (CXCL8), and prostacyclin. Does not show fibrinolytic or fibrinogenolytic activities. The sequence is that of Hemolin from Lonomia obliqua (Moth).